The following is a 254-amino-acid chain: Major prion protein (254 aa).

The N-terminal stretch at 1-22 (MANLSYWLLALFVATWTDVGLC) is a signal peptide. Residues 23–231 (KKRPKPGGWN…SQAYYDGRRS (209 aa)) form an interaction with GRB2, ERI3 and SYN1 region. Residues 25-104 (RPKPGGWNTG…THNQWNKPSK (80 aa)) are disordered. 5 tandem repeats follow at residues 51 to 59 (PQGGGTWGQ), 60 to 67 (PHGGGWGQ), 68 to 75 (PHGGGWGQ), 76 to 83 (PHGGGWGQ), and 84 to 91 (PHGGGWGQ). The interval 51-91 (PQGGGTWGQPHGGGWGQPHGGGWGQPHGGGWGQPHGGGWGQ) is 5 X 8 AA tandem repeats of P-H-G-G-G-W-G-Q. Over residues 52-95 (QGGGTWGQPHGGGWGQPHGGGWGQPHGGGWGQPHGGGWGQGGGT) the composition is skewed to gly residues. H61, G62, G63, H69, G70, G71, H77, G78, G79, H85, G86, and G87 together coordinate Cu(2+). The prP27-30 (protease resistant core) stretch occupies residues 90–231 (GQGGGTHNQW…SQAYYDGRRS (142 aa)). The cysteines at positions 179 and 214 are disulfide-linked. N-linked (GlcNAc...) asparagine glycosylation is found at N181 and N197. A lipid anchor (GPI-anchor amidated serine) is attached at S231. Residues 232-254 (SAVLFSSPPVILLISFLIFLIVG) constitute a propeptide, removed in mature form.

This sequence belongs to the prion family. In terms of assembly, monomer and homodimer. Has a tendency to aggregate into amyloid fibrils containing a cross-beta spine, formed by a steric zipper of superposed beta-strands. Soluble oligomers may represent an intermediate stage on the path to fibril formation. Copper binding may promote oligomerization. Interacts with GRB2, APP, ERI3/PRNPIP and SYN1. Mislocalized cytosolically exposed PrP interacts with MGRN1; this interaction alters MGRN1 subcellular location and causes lysosomal enlargement. Interacts with KIAA1191.

The protein localises to the cell membrane. The protein resides in the golgi apparatus. Its function is as follows. Its primary physiological function is unclear. Has cytoprotective activity against internal or environmental stresses. May play a role in neuronal development and synaptic plasticity. May be required for neuronal myelin sheath maintenance. May play a role in iron uptake and iron homeostasis. Soluble oligomers are toxic to cultured neuroblastoma cells and induce apoptosis (in vitro). Association with GPC1 (via its heparan sulfate chains) targets PRNP to lipid rafts. Also provides Cu(2+) or Zn(2+) for the ascorbate-mediated GPC1 deaminase degradation of its heparan sulfate side chains. In Cricetulus griseus (Chinese hamster), this protein is Major prion protein (PRNP).